A 390-amino-acid polypeptide reads, in one-letter code: HIT domain-containing protein DDB_G0272839 (390 aa).

The tract at residues 168 to 201 is disordered; sequence DNENEKEKEKEMELDNDNTNTESIPPITSKSTST. The span at 184–201 shows a compositional bias: low complexity; sequence DNTNTESIPPITSKSTST. One can recognise an HIT domain in the interval 232–343; that stretch reads YFCNKPESFL…ISNDYNTKYL (112 aa).

This Dictyostelium discoideum (Social amoeba) protein is HIT domain-containing protein DDB_G0272839.